The following is a 1529-amino-acid chain: DNA (cytosine-5)-methyltransferase 1B (1529 aa).

2 disordered regions span residues 1-56 and 674-706; these read MVKS…RAAC and DDEL…TRSR. The span at 21 to 35 shows a compositional bias: basic and acidic residues; the sequence is QKKDEDTTDKGKLDE. Over residues 674–694 the composition is skewed to acidic residues; the sequence is DDELEENEDEDAEEEAQIEEE. Residues 697–706 are compositionally biased toward polar residues; it reads SKTPPSTRSR. BAH domains are found at residues 741–873 and 910–1049; these read LRIN…FSLP and ITYN…KQLP. Positions 1093–1527 constitute an SAM-dependent MTase C5-type domain; that stretch reads LATLDIFAGC…RKLKEAVDAK (435 aa). Residue C1198 is part of the active site.

It belongs to the class I-like SAM-binding methyltransferase superfamily. C5-methyltransferase family. As to expression, expressed in roots and inflorescences. Expressed in roots, panicles, anthers, pistils, endosperm and imbibed embryos. Expressed in tissues containing actively replicating and dividing cells, such as shoot and root meristems.

It is found in the nucleus. It catalyses the reaction a 2'-deoxycytidine in DNA + S-adenosyl-L-methionine = a 5-methyl-2'-deoxycytidine in DNA + S-adenosyl-L-homocysteine + H(+). Its function is as follows. Major CG methylase that methylates chromatin CpG residues and maintains DNA methylation. Plays a major role in genomic imprinting, regulation of embryogenesis and seed viability. Maintains DNA methylation at the FIE1 gene locus in the embryo. The chain is DNA (cytosine-5)-methyltransferase 1B (MET1B) from Oryza sativa subsp. japonica (Rice).